The sequence spans 208 residues: Ubiquitin-conjugating enzyme E2 S (208 aa).

The UBC core domain maps to 14–160 (QTIRQVMREL…ARMMTEIHAQ (147 aa)). Cys-98 functions as the Glycyl thioester intermediate in the catalytic mechanism. The disordered stretch occupies residues 159-208 (AQPAKCASTTSDAKDDDGPSTKKHAGLDKKLQDKKKEKLLKEKKRMLKRL). Over residues 170–198 (DAKDDDGPSTKKHAGLDKKLQDKKKEKLL) the composition is skewed to basic and acidic residues. Residues 199 to 208 (KEKKRMLKRL) are compositionally biased toward basic residues.

This sequence belongs to the ubiquitin-conjugating enzyme family.

It catalyses the reaction S-ubiquitinyl-[E1 ubiquitin-activating enzyme]-L-cysteine + [E2 ubiquitin-conjugating enzyme]-L-cysteine = [E1 ubiquitin-activating enzyme]-L-cysteine + S-ubiquitinyl-[E2 ubiquitin-conjugating enzyme]-L-cysteine.. Its pathway is protein modification; protein ubiquitination. Its function is as follows. Catalyzes the covalent attachment of ubiquitin to other proteins. Acts as an essential factor of the anaphase promoting complex/cyclosome (APC/C), a cell cycle-regulated ubiquitin ligase that controls progression through mitosis. Acts by specifically elongating polyubiquitin chains initiated by the E2 enzyme vih/UbcH10 on APC/C substrates, enhancing the degradation of APC/C substrates by the proteasome and promoting mitotic exit. The chain is Ubiquitin-conjugating enzyme E2 S from Drosophila willistoni (Fruit fly).